Here is a 104-residue protein sequence, read N- to C-terminus: Phosphoribosyl-ATP pyrophosphatase (104 aa).

It belongs to the PRA-PH family.

Its subcellular location is the cytoplasm. It catalyses the reaction 1-(5-phospho-beta-D-ribosyl)-ATP + H2O = 1-(5-phospho-beta-D-ribosyl)-5'-AMP + diphosphate + H(+). The protein operates within amino-acid biosynthesis; L-histidine biosynthesis; L-histidine from 5-phospho-alpha-D-ribose 1-diphosphate: step 2/9. This Streptococcus sanguinis (strain SK36) protein is Phosphoribosyl-ATP pyrophosphatase.